The chain runs to 142 residues: Large ribosomal subunit protein uL11 (142 aa).

Belongs to the universal ribosomal protein uL11 family. As to quaternary structure, part of the ribosomal stalk of the 50S ribosomal subunit. Interacts with L10 and the large rRNA to form the base of the stalk. L10 forms an elongated spine to which L12 dimers bind in a sequential fashion forming a multimeric L10(L12)X complex. In terms of processing, one or more lysine residues are methylated.

Functionally, forms part of the ribosomal stalk which helps the ribosome interact with GTP-bound translation factors. This is Large ribosomal subunit protein uL11 from Shewanella sediminis (strain HAW-EB3).